Consider the following 860-residue polypeptide: Rod cGMP-specific 3',5'-cyclic phosphodiesterase subunit alpha (860 aa).

At Gly-2 the chain carries N-acetylglycine. 2 consecutive GAF domains span residues 73–222 and 254–431; these read QTEK…NLIM and DIER…GWSV. Positions 483–816 constitute a PDEase domain; that stretch reads EEEELAEILQ…KEWKALADEY (334 aa). His-559 acts as the Proton donor in catalysis. 4 residues coordinate a divalent metal cation: His-563, His-599, Asp-600, and Asp-720. The disordered stretch occupies residues 821–860; that stretch reads KVQEEKKQKQQSAKSAAAGNQPGGNPSPGGATTSKSCCIQ. Positions 830–851 are enriched in low complexity; the sequence is QQSAKSAAAGNQPGGNPSPGGA. Cys-857 is modified (cysteine methyl ester). Cys-857 carries S-farnesyl cysteine lipidation. Residues 858–860 constitute a propeptide, removed in mature form; it reads CIQ.

This sequence belongs to the cyclic nucleotide phosphodiesterase family. In terms of assembly, oligomer composed of two catalytic chains (alpha and beta), an inhibitory chain (gamma) and the delta chain. It depends on a divalent metal cation as a cofactor.

The protein localises to the cell membrane. Its subcellular location is the cell projection. It localises to the cilium. The protein resides in the photoreceptor outer segment. The catalysed reaction is 3',5'-cyclic GMP + H2O = GMP + H(+). Functionally, rod-specific cGMP phosphodiesterase that catalyzes the hydrolysis of 3',5'-cyclic GMP. This protein participates in processes of transmission and amplification of the visual signal. The polypeptide is Rod cGMP-specific 3',5'-cyclic phosphodiesterase subunit alpha (Homo sapiens (Human)).